The following is a 296-amino-acid chain: Nucleotide-binding protein SPCG_1551 (296 aa).

13–20 (GMSGAGKT) provides a ligand contact to ATP. 63 to 66 (DMRS) is a binding site for GTP.

This sequence belongs to the RapZ-like family.

Displays ATPase and GTPase activities. The chain is Nucleotide-binding protein SPCG_1551 from Streptococcus pneumoniae (strain CGSP14).